Here is a 512-residue protein sequence, read N- to C-terminus: 2,3-bisphosphoglycerate-independent phosphoglycerate mutase (512 aa).

The Mn(2+) site is built by D11 and S61. S61 functions as the Phosphoserine intermediate in the catalytic mechanism. Substrate contacts are provided by residues H122, 152-153 (RD), R184, R190, 259-262 (RADR), and K332. The Mn(2+) site is built by D399, H403, D440, H441, and H459.

This sequence belongs to the BPG-independent phosphoglycerate mutase family. Monomer. Mn(2+) serves as cofactor.

The catalysed reaction is (2R)-2-phosphoglycerate = (2R)-3-phosphoglycerate. It functions in the pathway carbohydrate degradation; glycolysis; pyruvate from D-glyceraldehyde 3-phosphate: step 3/5. Catalyzes the interconversion of 2-phosphoglycerate and 3-phosphoglycerate. This chain is 2,3-bisphosphoglycerate-independent phosphoglycerate mutase, found in Francisella tularensis subsp. holarctica (strain FTNF002-00 / FTA).